The chain runs to 336 residues: Dihydroorotate dehydrogenase (quinone) (336 aa).

FMN-binding positions include 62–66 (AGLDK) and threonine 86. Substrate is bound at residue lysine 66. 111-115 (NRMGF) is a substrate binding site. FMN-binding residues include asparagine 139 and asparagine 172. Residue asparagine 172 coordinates substrate. The active-site Nucleophile is the serine 175. Asparagine 177 lines the substrate pocket. FMN-binding residues include lysine 217 and threonine 245. 246-247 (NT) is a substrate binding site. FMN is bound by residues glycine 268, glycine 297, and 318–319 (YS).

The protein belongs to the dihydroorotate dehydrogenase family. Type 2 subfamily. As to quaternary structure, monomer. Requires FMN as cofactor.

The protein localises to the cell membrane. The catalysed reaction is (S)-dihydroorotate + a quinone = orotate + a quinol. Its pathway is pyrimidine metabolism; UMP biosynthesis via de novo pathway; orotate from (S)-dihydroorotate (quinone route): step 1/1. Functionally, catalyzes the conversion of dihydroorotate to orotate with quinone as electron acceptor. The polypeptide is Dihydroorotate dehydrogenase (quinone) (Salmonella arizonae (strain ATCC BAA-731 / CDC346-86 / RSK2980)).